The sequence spans 144 residues: Cytochrome c oxidase subunit 4 isoform 1, mitochondrial (144 aa).

At 1 to 73 the chain is on the mitochondrial matrix side; that stretch reads SVVKSEDYAL…SFAEMNRGSN (73 aa). Lys4 is modified (N6-acetyllysine; alternate). At Lys4 the chain carries N6-succinyllysine; alternate. Phosphoserine occurs at positions 31 and 33. Position 35 is an N6-acetyllysine; alternate (Lys35). At Lys35 the chain carries N6-succinyllysine; alternate. At Lys42 the chain carries N6-acetyllysine. The chain crosses the membrane as a helical span at residues 74–99; it reads EWKTVVGAAMFFIGFTAILIILEKRY. Residues 100 to 144 are Mitochondrial intermembrane-facing; sequence VYGPLPHTFDKEWVAMQTKRMLDLKVNPVDGLASKWDYDKKEWKK.

The protein belongs to the cytochrome c oxidase IV family. In terms of assembly, component of the cytochrome c oxidase (complex IV, CIV), a multisubunit enzyme composed of 14 subunits. The complex is composed of a catalytic core of 3 subunits MT-CO1, MT-CO2 and MT-CO3, encoded in the mitochondrial DNA, and 11 supernumerary subunits COX4I, COX5A, COX5B, COX6A, COX6B, COX6C, COX7A, COX7B, COX7C, COX8 and NDUFA4, which are encoded in the nuclear genome. The complex exists as a monomer or a dimer and forms supercomplexes (SCs) in the inner mitochondrial membrane with NADH-ubiquinone oxidoreductase (complex I, CI) and ubiquinol-cytochrome c oxidoreductase (cytochrome b-c1 complex, complex III, CIII), resulting in different assemblies (supercomplex SCI(1)III(2)IV(1) and megacomplex MCI(2)III(2)IV(2)). Interacts with PHB2; the interaction decreases in absence of SPHK2. Interacts with AFG1L. Interacts with ABCB7; this interaction allows the regulation of cellular iron homeostasis and cellular reactive oxygen species (ROS) levels in cardiomyocytes. Interacts with FLVCR2; this interaction occurs in the absence of heme and is disrupted upon heme binding. Interacts with IRGC.

The protein resides in the mitochondrion inner membrane. It functions in the pathway energy metabolism; oxidative phosphorylation. Component of the cytochrome c oxidase, the last enzyme in the mitochondrial electron transport chain which drives oxidative phosphorylation. The respiratory chain contains 3 multisubunit complexes succinate dehydrogenase (complex II, CII), ubiquinol-cytochrome c oxidoreductase (cytochrome b-c1 complex, complex III, CIII) and cytochrome c oxidase (complex IV, CIV), that cooperate to transfer electrons derived from NADH and succinate to molecular oxygen, creating an electrochemical gradient over the inner membrane that drives transmembrane transport and the ATP synthase. Cytochrome c oxidase is the component of the respiratory chain that catalyzes the reduction of oxygen to water. Electrons originating from reduced cytochrome c in the intermembrane space (IMS) are transferred via the dinuclear copper A center (CU(A)) of subunit 2 and heme A of subunit 1 to the active site in subunit 1, a binuclear center (BNC) formed by heme A3 and copper B (CU(B)). The BNC reduces molecular oxygen to 2 water molecules using 4 electrons from cytochrome c in the IMS and 4 protons from the mitochondrial matrix. This chain is Cytochrome c oxidase subunit 4 isoform 1, mitochondrial (COX4I1), found in Aotus azarae (Azara's night monkey).